A 297-amino-acid chain; its full sequence is Nucleotide-binding protein BURPS668_0577 (297 aa).

ATP is bound at residue 8-15; the sequence is GISGSGKS. Residue 57 to 60 coordinates GTP; sequence DARS.

Belongs to the RapZ-like family.

In terms of biological role, displays ATPase and GTPase activities. The sequence is that of Nucleotide-binding protein BURPS668_0577 from Burkholderia pseudomallei (strain 668).